The following is a 72-amino-acid chain: Rubredoxin in uptake hydrogenase operon (72 aa).

Residues 19–70 (DAVLECKICWHRYDPAVGDEVWQILAGTPFAALPAHWRCPQCDGDREQFMVV) form the Rubredoxin-like domain. C24, C27, C57, and C60 together coordinate Fe cation.

The protein belongs to the rubredoxin family. Requires Fe(3+) as cofactor.

Its function is as follows. Could be an electron transport intermediate in hydrogen oxidation. The chain is Rubredoxin in uptake hydrogenase operon (hupR) from Azotobacter chroococcum mcd 1.